Reading from the N-terminus, the 111-residue chain is 2Fe-2S ferredoxin (111 aa).

The 103-residue stretch at 2–104 folds into the 2Fe-2S ferredoxin-type domain; sequence PKIVILPHQD…DLVVEIPRYT (103 aa). Residues cysteine 42, cysteine 48, cysteine 51, and cysteine 87 each coordinate [2Fe-2S] cluster.

It belongs to the adrenodoxin/putidaredoxin family. The cofactor is [2Fe-2S] cluster.

In terms of biological role, ferredoxin are iron-sulfur proteins that transfer electrons in a wide variety of metabolic reactions. Although the function of this ferredoxin is unknown it is probable that it has a role as a cellular electron transfer protein. Involved in the in vivo assembly of the Fe-S clusters in a wide variety of iron-sulfur proteins. This chain is 2Fe-2S ferredoxin (fdx), found in Escherichia coli O157:H7.